The sequence spans 494 residues: Glutamate--tRNA ligase (494 aa).

The 'HIGH' region motif lies at 9–19 (PSPTGDPHLGT). A 'KMSKS' region motif is present at residues 250–254 (KLSKR). Residue Lys-253 participates in ATP binding.

This sequence belongs to the class-I aminoacyl-tRNA synthetase family. Glutamate--tRNA ligase type 1 subfamily. As to quaternary structure, monomer.

It is found in the cytoplasm. The catalysed reaction is tRNA(Glu) + L-glutamate + ATP = L-glutamyl-tRNA(Glu) + AMP + diphosphate. In terms of biological role, catalyzes the attachment of glutamate to tRNA(Glu) in a two-step reaction: glutamate is first activated by ATP to form Glu-AMP and then transferred to the acceptor end of tRNA(Glu). The chain is Glutamate--tRNA ligase from Pseudoalteromonas translucida (strain TAC 125).